The sequence spans 390 residues: uncharacterized protein (390 aa).

11 helical membrane passes run isoleucine 7 to isoleucine 27, leucine 35 to leucine 55, leucine 77 to isoleucine 97, isoleucine 101 to isoleucine 121, glycine 128 to leucine 148, valine 161 to proline 181, valine 203 to tyrosine 223, leucine 238 to glycine 258, leucine 281 to tryptophan 301, methionine 335 to leucine 355, and serine 357 to phenylalanine 377.

The protein belongs to the major facilitator superfamily.

It localises to the cell membrane. This is an uncharacterized protein from Bacillus subtilis (strain 168).